The primary structure comprises 191 residues: Cell division protein SepF (191 aa).

The segment covering 156–167 has biased composition (polar residues); it reads EEASPSNMSNKG. Positions 156-191 are disordered; the sequence is EEASPSNMSNKGNDLISKETSPAPEPAWGETVATAL.

Belongs to the SepF family. In terms of assembly, homodimer. Interacts with FtsZ.

It localises to the cytoplasm. Functionally, cell division protein that is part of the divisome complex and is recruited early to the Z-ring. Probably stimulates Z-ring formation, perhaps through the cross-linking of FtsZ protofilaments. Its function overlaps with FtsA. The polypeptide is Cell division protein SepF (Prochlorococcus marinus (strain NATL1A)).